Reading from the N-terminus, the 1006-residue chain is Beta-galactosidase (1006 aa).

The N-terminal stretch at 1-19 (MKLSSACAIALLAAQAAGA) is a signal peptide. N156 carries N-linked (GlcNAc...) asparagine glycosylation. E200 serves as the catalytic Proton donor. The active-site Nucleophile is E298. N373, N402, N422, N478, N522, N622, N739, N760, N777, and N805 each carry an N-linked (GlcNAc...) asparagine glycan.

It belongs to the glycosyl hydrolase 35 family.

It carries out the reaction Hydrolysis of terminal non-reducing beta-D-galactose residues in beta-D-galactosides.. In terms of biological role, cleaves beta-linked terminal galactosyl residues from gangliosides, glycoproteins, and glycosaminoglycans. In Aspergillus niger, this protein is Beta-galactosidase (lacA).